Consider the following 383-residue polypeptide: Schlafen-like protein 3 (383 aa).

Residues 118 to 266 (FDYQSNFSDV…SDKVYQISSG (149 aa)) are SLFN-like fold. The helical transmembrane segment at 354-374 (LLDIQNIGWIFFGTALSFCIY) threads the bilayer.

This sequence belongs to the Schlafen family. As to quaternary structure, component of the PUCH (precursor of 21U RNA 5'-end cleavage holoenzyme) complex; consisting of tofu-1, tofu-2 and either slfl-3 or slfl-4. Within the complex, interacts (via N-terminus) with tofu-2 (via N-terminus); the presence of tofu-1 is required for the interaction.

It is found in the mitochondrion membrane. Its function is as follows. Component of the trimeric PUCH (precursor of 21U RNA 5'-end cleavage holoenzyme) complex, that acts as an endoribonuclease processing the 5'-end of precursor Piwi-interacting RNAs (piRNAs). The PUCH complex consists of tofu-1, tofu-2 and either slfl-3 or slfl-4, where tofu-2 exhibits endoribonuclease activity. PUCH-mediated processing strictly requires a 7-methyl-G cap (m7 G-cap) and an uracil at position three (U3). PUCH also exhibits a strict bias for piRNA precursors with an A or G at position 1. Mature piRNA production is enhanced by the interaction of PUCH with the PETISCO complex, which is stabilizing piRNA precursors and allows their processing by PUCH. The polypeptide is Schlafen-like protein 3 (Caenorhabditis elegans).